A 178-amino-acid chain; its full sequence is Large ribosomal subunit protein uL6c (178 aa).

This sequence belongs to the universal ribosomal protein uL6 family. In terms of assembly, part of the 50S ribosomal subunit.

The protein localises to the plastid. It is found in the chloroplast. In terms of biological role, binds 23S rRNA. This Phaeodactylum tricornutum (strain CCAP 1055/1) protein is Large ribosomal subunit protein uL6c (rpl6).